We begin with the raw amino-acid sequence, 227 residues long: MAAEIILRLERIGRAYKEADRELIILNDADFTLRRGEMVALVAPSGAGKSTLLHTAGLLERPDSGDVVLDGRSCSKLSDDERTAVRRNDVGFVYQFHHLLPEFSALENVMLPQMIRGLSRKAAAERAQQLLEYMKIGKRASHRPAELSGGEQQRVAIARAVANAPLVLLADEPTGNLDPTTSSYVFGALEALVRQSGLAALIATHNHELARRMDRRVTLKDGRVVDL.

In terms of domain architecture, ABC transporter spans 7–227; it reads LRLERIGRAY…TLKDGRVVDL (221 aa). 43–50 is an ATP binding site; that stretch reads APSGAGKS.

Belongs to the ABC transporter superfamily. Lipoprotein translocase (TC 3.A.1.125) family. The complex is composed of two ATP-binding proteins (LolD) and two transmembrane proteins (LolC and LolE).

Its subcellular location is the cell inner membrane. Functionally, part of the ABC transporter complex LolCDE involved in the translocation of mature outer membrane-directed lipoproteins, from the inner membrane to the periplasmic chaperone, LolA. Responsible for the formation of the LolA-lipoprotein complex in an ATP-dependent manner. The polypeptide is Lipoprotein-releasing system ATP-binding protein LolD (Brucella abortus biovar 1 (strain 9-941)).